Here is a 168-residue protein sequence, read N- to C-terminus: MVEDILAPGLRVVFCGINPGLSSAGTGFPFAHPANRFWKVIYQAGFTDRQLKPQEAQHLLDYRCGVTKLVDRPTVQASEVSKQELHAGGRKLIEKIEDYQPQALAILGKQAYEQGFSQRGAQWGKQTLTIGSTQIWVLPNPSGLSRVSLEKLVEAYRELDQALVVRGR.

It belongs to the uracil-DNA glycosylase (UDG) superfamily. TDG/mug family. As to quaternary structure, binds DNA as a monomer.

It localises to the cytoplasm. It catalyses the reaction Specifically hydrolyzes mismatched double-stranded DNA and polynucleotides, releasing free uracil.. In terms of biological role, excises ethenocytosine and uracil, which can arise by alkylation or deamination of cytosine, respectively, from the corresponding mispairs with guanine in ds-DNA. It is capable of hydrolyzing the carbon-nitrogen bond between the sugar-phosphate backbone of the DNA and the mispaired base. The complementary strand guanine functions in substrate recognition. Required for DNA damage lesion repair in stationary-phase cells. This is G/U mismatch-specific DNA glycosylase from Escherichia coli O9:H4 (strain HS).